An 88-amino-acid chain; its full sequence is U-scoloptoxin(01)-Tl1a (88 aa).

A signal peptide spans 1-16 (MSVYGLLSLLIFIVLA). Positions 25–81 (GKDCSEKEEYLYDSSNCDIFYECDESLKPQRMMCGPGTGWNQDKLVCDFLTNIDCTR) constitute a Chitin-binding type-2 domain. Cysteines 58 and 71 form a disulfide.

The protein belongs to the scoloptoxin-01 family. In terms of processing, contains 3 disulfide bonds. As to expression, expressed by the venom gland.

The protein resides in the secreted. This is U-scoloptoxin(01)-Tl1a from Thereuopoda longicornis (Long-legged centipede).